The sequence spans 136 residues: Nucleoside diphosphate kinase (136 aa).

Lysine 10, phenylalanine 58, arginine 86, threonine 92, arginine 104, and asparagine 114 together coordinate ATP. The active-site Pros-phosphohistidine intermediate is histidine 117.

This sequence belongs to the NDK family. In terms of assembly, homotetramer. The cofactor is Mg(2+).

The protein resides in the cytoplasm. It catalyses the reaction a 2'-deoxyribonucleoside 5'-diphosphate + ATP = a 2'-deoxyribonucleoside 5'-triphosphate + ADP. The enzyme catalyses a ribonucleoside 5'-diphosphate + ATP = a ribonucleoside 5'-triphosphate + ADP. Major role in the synthesis of nucleoside triphosphates other than ATP. The ATP gamma phosphate is transferred to the NDP beta phosphate via a ping-pong mechanism, using a phosphorylated active-site intermediate. The polypeptide is Nucleoside diphosphate kinase (Mycobacteroides abscessus (strain ATCC 19977 / DSM 44196 / CCUG 20993 / CIP 104536 / JCM 13569 / NCTC 13031 / TMC 1543 / L948) (Mycobacterium abscessus)).